A 231-amino-acid polypeptide reads, in one-letter code: 7-cyano-7-deazaguanine synthase (231 aa).

Position 8–18 (8–18) interacts with ATP; sequence FSGGQDSTTCL. Zn(2+) is bound by residues C188, C197, C200, and C203.

This sequence belongs to the QueC family. Zn(2+) serves as cofactor.

It carries out the reaction 7-carboxy-7-deazaguanine + NH4(+) + ATP = 7-cyano-7-deazaguanine + ADP + phosphate + H2O + H(+). Its pathway is purine metabolism; 7-cyano-7-deazaguanine biosynthesis. Functionally, catalyzes the ATP-dependent conversion of 7-carboxy-7-deazaguanine (CDG) to 7-cyano-7-deazaguanine (preQ(0)). The protein is 7-cyano-7-deazaguanine synthase of Citrobacter koseri (strain ATCC BAA-895 / CDC 4225-83 / SGSC4696).